A 260-amino-acid polypeptide reads, in one-letter code: MFIKNGLLLSLATSVLATHGARSHSQAATSKLSKRFTFPIPNSEGSVTLDEVYEIDGETFDGGMKTYGRGVSCTGQDEGGDSDAVFIVKNGGTLKNVIIGSDQIEGVHCEGSCTIENVWWEAVCEDALSLKTGDGPFNVVGGGAQGADDKVIQHNGGGTVSISDFTVYDFGKLYRSCGNCGDQYERHVVIEGVTAVDGKYLVGINSNYGDTATIDSATCATDVKTICAEYKGTDNNDEEPEEVSDGPSDYCIYTEPLSEC.

A signal peptide spans 1 to 17 (MFIKNGLLLSLATSVLA).

This sequence belongs to the polysaccharide lyase 3 family. Ca(2+) serves as cofactor.

Its subcellular location is the secreted. It catalyses the reaction Eliminative cleavage of (1-&gt;4)-alpha-D-galacturonan to give oligosaccharides with 4-deoxy-alpha-D-galact-4-enuronosyl groups at their non-reducing ends.. Functionally, pectinolytic enzyme consist of four classes of enzymes: pectin lyase, polygalacturonase, pectin methylesterase and rhamnogalacturonase. Among pectinolytic enzymes, pectin lyase is the most important in depolymerization of pectin, since it cleaves internal glycosidic bonds of highly methylated pectins. Favors pectate, the anion, over pectin, the methyl ester. This chain is Pectate lyase H (plyH), found in Emericella nidulans (strain FGSC A4 / ATCC 38163 / CBS 112.46 / NRRL 194 / M139) (Aspergillus nidulans).